The following is a 394-amino-acid chain: Elongation factor Tu (394 aa).

The tr-type G domain occupies 10–204 (KPHVNVGTIG…ALDSYIPEPE (195 aa)). Residues 19-26 (GHVDHGKT) form a G1 region. 19–26 (GHVDHGKT) contributes to the GTP binding site. Thr-26 provides a ligand contact to Mg(2+). The G2 stretch occupies residues 60–64 (GITIN). The interval 81–84 (DCPG) is G3. GTP contacts are provided by residues 81–85 (DCPGH) and 136–139 (NKCD). The segment at 136–139 (NKCD) is G4. Positions 174-176 (SAL) are G5.

It belongs to the TRAFAC class translation factor GTPase superfamily. Classic translation factor GTPase family. EF-Tu/EF-1A subfamily. Monomer.

It is found in the cytoplasm. The enzyme catalyses GTP + H2O = GDP + phosphate + H(+). GTP hydrolase that promotes the GTP-dependent binding of aminoacyl-tRNA to the A-site of ribosomes during protein biosynthesis. This is Elongation factor Tu from Shewanella amazonensis (strain ATCC BAA-1098 / SB2B).